We begin with the raw amino-acid sequence, 218 residues long: Small ribosomal subunit protein uS7m (218 aa).

The transit peptide at 1–19 (MSLLGRIAEKTSRLSCLRL) directs the protein to the mitochondrion.

The protein belongs to the universal ribosomal protein uS7 family. In terms of assembly, component of the mitochondrial ribosome small subunit (28S) which comprises a 12S rRNA and about 30 distinct proteins.

The protein localises to the mitochondrion. This is Small ribosomal subunit protein uS7m (mRpS7) from Drosophila melanogaster (Fruit fly).